The primary structure comprises 214 residues: GTP-binding nuclear protein GSP1/Ran (214 aa).

Residues 4–168 (EVPTFKLVLV…LWLARKLAGN (165 aa)) form the Small GTPase Ran-type domain. A GTP-binding site is contributed by 15 to 22 (DGGTGKTT). Positions 34–42 (KKYIATIGV) are switch-I. Residues Gly65, 119–122 (NKVD), and 147–149 (SAK) each bind GTP. The segment at 65–81 (GQEKFGGLRDGYYINAQ) is switch-II.

The protein belongs to the small GTPase superfamily. Ran family. In terms of assembly, found in a nuclear export complex with RanGTP, exportin and pre-miRNA.

Its subcellular location is the nucleus. Its function is as follows. GTP-binding protein involved in nucleocytoplasmic transport. Required for the import of protein into the nucleus and also for RNA export. Involved in chromatin condensation and control of cell cycle. The polypeptide is GTP-binding nuclear protein GSP1/Ran (GSP1) (Eremothecium gossypii (strain ATCC 10895 / CBS 109.51 / FGSC 9923 / NRRL Y-1056) (Yeast)).